The following is a 355-amino-acid chain: Type II methyltransferase M.MthZI (355 aa).

Belongs to the N(4)/N(6)-methyltransferase family. N(4) subfamily.

The enzyme catalyses a 2'-deoxycytidine in DNA + S-adenosyl-L-methionine = an N(4)-methyl-2'-deoxycytidine in DNA + S-adenosyl-L-homocysteine + H(+). A beta subtype methylase that recognizes the double-stranded sequence 5'-CTAG-3', methylates C-1 on both strands, and protects the DNA from cleavage by the MthZI endonuclease. The sequence is that of Type II methyltransferase M.MthZI from Methanothermobacter thermautotrophicus (Methanobacterium thermoformicicum).